A 402-amino-acid chain; its full sequence is MTILKASQVKLTARRTGLARLDPSPTGTLELANELLQRNHDSYHMYFRDVGGHNHIAHSVLSVLAMGGGPKELNRAYDDGYGYQRPLPALNFLHFFESEIDAKGWQAVLQEYCFSRTPLAEAMFSQLYEGLLHPIIHLGFGIEFEQPSIIAEGLAHAASHDPGNIDTFFLRSEELARSGSVPAKPLVELYEEVRRNEKTRTAGRMQDGPFRLRDGPLARSMDEIVHIAAQFQIKPEDLERGTAEMINCAAYSAGRRSGPASVLVKQSWIKLEDRIRLVEWKARLDLAWYAANGAAELRLEDISGYEPTASKGMEWHALYKAVNEVHDDGHIAKFVRALKNGETVSAPFEQGDGADAFPIKGDLWLRIAQMGYDTTKDGHDNSDKWVWGAGFDLAWMKVPDSQ.

This sequence belongs to the questin oxidase family.

Baeyer-Villiger oxidase; part of the gene cluster that mediates the biosynthesis of notoamide, a fungal indole alkaloid that belongs to a family of natural products containing a characteristic bicyclo[2.2.2]diazaoctane core. The first step of notoamide biosynthesis involves coupling of L-proline and L-tryptophan by the bimodular NRPS notE, to produce cyclo-L-tryptophan-L-proline called brevianamide F. The reverse prenyltransferase notF then acts as a deoxybrevianamide E synthase and converts brevianamide F to deoxybrevianamide E via reverse prenylation at C-2 of the indole ring leading to the bicyclo[2.2.2]diazaoctane core. Deoxybrevianamide E is further hydroxylated at C-6 of the indole ring, likely catalyzed by the cytochrome P450 monooxygenase notG, to yield 6-hydroxy-deoxybrevianamide E. 6-hydroxy-deoxybrevianamide E is a specific substrate of the prenyltransferase notC for normal prenylation at C-7 to produce 6-hydroxy-7-prenyl-deoxybrevianamide, also called notoamide S. As the proposed pivotal branching point in notoamide biosynthesis, notoamide S can be diverted to notoamide E through an oxidative pyran ring closure putatively catalyzed by either notH cytochrome P450 monooxygenase or the notD FAD-linked oxidoreductase. This step would be followed by an indole 2,3-epoxidation-initiated pinacol-like rearrangement catalyzed by the notB FAD-dependent monooxygenase leading to the formation of notoamide C and notoamide D. On the other hand notoamide S is converted to notoamide T by notH (or notD), a bifunctional oxidase that also functions as the intramolecular Diels-Alderase responsible for generation of (+)-notoamide T. To generate antipodal (-)-notoaminide T, notH' (or notD') in Aspergillus versicolor is expected to catalyze a Diels-Alder reaction leading to the opposite stereochemistry. The remaining oxidoreductase notD (or notH) likely catalyzes the oxidative pyran ring formation to yield (+)-stephacidin A. The FAD-dependent monooxygenase notI is highly similar to notB and is predicted to catalyze a similar conversion from (+)-stephacidin A to (-)-notoamide B via the 2,3-epoxidation of (+)-stephacidin A followed by a pinacol-type rearrangement. Finally, it remains unclear which enzyme could be responsible for the final hydroxylation steps leading to notoamide A and sclerotiamide. The function of notM in the notoamide biosynthesis has not been determined yet. The polypeptide is Baeyer-Villiger oxidase notM (Aspergillus sp. (strain MF297-2)).